The following is a 134-amino-acid chain: Small ribosomal subunit protein bS16 (134 aa).

A disordered region spans residues 105–134; the sequence is QNERREKRLAIKTRRRQAKKAAEAEGQESA. Basic residues predominate over residues 114–123; that stretch reads AIKTRRRQAK.

The protein belongs to the bacterial ribosomal protein bS16 family.

The chain is Small ribosomal subunit protein bS16 from Chlorobium phaeobacteroides (strain BS1).